The sequence spans 490 residues: Betaine aldehyde dehydrogenase (490 aa).

The K(+) site is built by Thr-26, Ile-27, and Asp-93. 150 to 152 is a binding site for NAD(+); sequence GAW. Catalysis depends on Lys-162, which acts as the Charge relay system. Residue 176–179 coordinates NAD(+); sequence KPSE. Residue Val-180 coordinates K(+). An NAD(+)-binding site is contributed by 230-233; the sequence is GVAS. Leu-246 lines the K(+) pocket. Glu-252 serves as the catalytic Proton acceptor. 3 residues coordinate NAD(+): Gly-254, Cys-286, and Glu-387. The active-site Nucleophile is the Cys-286. Position 286 is a cysteine sulfenic acid (-SOH) (Cys-286). K(+) is bound by residues Lys-457 and Gly-460. The active-site Charge relay system is Glu-464.

Belongs to the aldehyde dehydrogenase family. Dimer of dimers. The cofactor is K(+).

It catalyses the reaction betaine aldehyde + NAD(+) + H2O = glycine betaine + NADH + 2 H(+). Its pathway is amine and polyamine biosynthesis; betaine biosynthesis via choline pathway; betaine from betaine aldehyde: step 1/1. In terms of biological role, involved in the biosynthesis of the osmoprotectant glycine betaine. Catalyzes the irreversible oxidation of betaine aldehyde to the corresponding acid. This Escherichia coli O6:K15:H31 (strain 536 / UPEC) protein is Betaine aldehyde dehydrogenase.